A 1079-amino-acid chain; its full sequence is DNA annealing helicase and endonuclease ZRANB3 (1079 aa).

A Helicase ATP-binding domain is found at 46–208 (IFALKRNGRC…FMQIEALFPQ (163 aa)). The DNA annealing helicase activity stretch occupies residues 46 to 481 (IFALKRNGRC…GRKEKIQAEE (436 aa)). 59 to 66 (DEMGLGKT) contributes to the ATP binding site. The DEAH box signature appears at 157-160 (DESH). Residues 325–481 (AVKDYIKMML…GRKEKIQAEE (157 aa)) enclose the Helicase C-terminal domain. The PIP-box motif lies at 519–526 (QHDIRSFF). At S569 the chain carries Phosphoserine. Residues 582–601 (ASEDHCSPSEETPSQSKQIR) form a disordered region. Residues 590 to 600 (SEETPSQSKQI) show a composition bias toward polar residues. The segment at 621-650 (PVEGWQCSLCTYINNSELPYCEMCETPQGS) adopts a RanBP2-type zinc-finger fold. A (Microbial infection) S-methylcysteine modification is found at C630. The interval 689 to 725 (LAQSEPGQLADSKEETPKIEKEDGLTSQPGNEQWKSS) is disordered. Positions 699 to 712 (DSKEETPKIEKEDG) are enriched in basic and acidic residues. The segment covering 713–725 (LTSQPGNEQWKSS) has biased composition (polar residues). Positions 1011 to 1051 (PGEGHFWQVDHIKPVYGGGGQCSLDNLQTLCTVCHKERTAR) constitute an HNH domain. Residues 1011–1079 (PGEGHFWQVD…SDITRFLVKK (69 aa)) form an endonuclease activity region. An APIM motif motif is present at residues 1074–1078 (RFLVK).

It belongs to the SNF2/RAD54 helicase family. In terms of assembly, interacts (via PIP-box and RanBP2-type zinc finger) with PCNA (when PCNA is polyubiquitinated via 'Lys-63'-linked polyubiquitin). In terms of processing, (Microbial infection) Methylation at Cys-630 by enteropathogenic E.coli protein NleE or S.flexneri protein OspZ: methylation disrupts ability to bind 'Lys-63'-linked ubiquitin.

The protein localises to the nucleus. It localises to the chromosome. Functionally, DNA annealing helicase and endonuclease required to maintain genome stability at stalled or collapsed replication forks by facilitating fork restart and limiting inappropriate recombination that could occur during template switching events. Recruited to the sites of stalled DNA replication by polyubiquitinated PCNA and acts as a structure-specific endonuclease that cleaves the replication fork D-loop intermediate, generating an accessible 3'-OH group in the template of the leading strand, which is amenable to extension by DNA polymerase. In addition to endonuclease activity, also catalyzes the fork regression via annealing helicase activity in order to prevent disintegration of the replication fork and the formation of double-strand breaks. The protein is DNA annealing helicase and endonuclease ZRANB3 of Homo sapiens (Human).